Consider the following 293-residue polypeptide: Short-chain dehydrogenase/reductase PhomF (293 aa).

NADP(+)-binding residues include Ile31 and Asn102. The active-site Proton donor is Ser175. NADP(+) contacts are provided by Tyr190, Lys194, and Ser225. Tyr190 functions as the Proton acceptor in the catalytic mechanism. Catalysis depends on Lys194, which acts as the Lowers pKa of active site Tyr.

This sequence belongs to the short-chain dehydrogenases/reductases (SDR) family.

In terms of biological role, short-chain dehydrogenase/reductase; part of the gene cluster that mediates the biosynthesis of the phomopsins, a group of hexapeptide mycotoxins which infects lupins and causes lupinosis disease in livestock. The role of phomF within the phomopsins biosynthesis pathway has still to be determined. The pathway starts with the processing of the precursor phomA by several endopeptidases including kexin proteases as well as the cluster-specific S41 family peptidase phomP1 and the oligopeptidase phomG to produce 10 identical copies of the hexapeptide Tyr-Val-Ile-Pro-Ile-Asp. After being excised from the precursor peptide, the core peptides are cyclized and modified post-translationally by enzymes encoded within the gene cluster. The timing and order of proteolysis of the phomA precursor and PTMs are still unknown. Two tyrosinase-like enzymes, phomQ1 and phomQ2, catalyze the chlorination and hydroxylation of Tyr, respectively. PhomYb, is proposed to be involved in the construction of the macrocyclic structure. The other 4 ustYa family proteins may be involved in PTMs that generate the unique structure of phomopsin A. PhomYa is required for the hydroxylation of C-beta of Tyr. PhomYc, phomYd, and phomYe are responsible for the biosynthesis of 2,3-dehydroisoleucine (dIle), 2,3-dehydroaspartic acid (dAsp), and 3,4-dehydroproline (dPro), respectively. While dIle formation by phomYc is indispensable for the installation of dAsp by phomYd, the order of the other PTMs have not been elucidated yet. Most of the biosynthetic enzymes likely have broad substrate specificity, and thus, there might be a metabolic grid from a precursor to phomopsin A. The enzyme(s) responsible for the biosynthesis of 3,4-dehydrovaline (dVal) have also not been identified yet. Finally, phomM acts as an S-adenosylmethionine-dependent alpha-N-methyltransferase that catalyzes two successive N-methylation reactions, converting N-desmethyl-phomopsin A to phomopsin A and phomopsin A further to an N,N-dimethylated congener called phomopsin E. This chain is Short-chain dehydrogenase/reductase PhomF, found in Diaporthe leptostromiformis (Lupinosis disease fungus).